The following is a 139-amino-acid chain: Non-structural protein 1 (139 aa).

Positions 136–139 match the DLNP; interaction with MAP1B motif; sequence DLNS.

The protein belongs to the pneumovirus non-structural protein 1 family. Monomer. Homomultimer. Heteromultimer with NS2. Interacts with the matrix protein M. Interacts with host ELOC and CUL2; this interaction allows NS1 to form an active E3 ligase with ELOC and CUL2. Interacts with host IRF3; this interaction leads to the disrupted association of IRF3 with CREBBP and thus reduced binding of IRF3 to the IFN-beta promoter. Interacts with host MAVS; this interaction prevents MAVS binding to RIGI and inhibits signaling pathway leading to interferon production. Interacts with host MAP1B/microtubule-associated protein 1B. Interacts with host TRIM25 (via SPRY domain); this interaction suppresses RIGI ubiquitination and results in decreased interaction between RIGI and MAVS.

It is found in the host cytoplasm. The protein localises to the host mitochondrion. It localises to the host nucleus. Its function is as follows. Plays a major role in antagonizing the type I IFN-mediated antiviral response by degrading or inhibiting multiple cellular factors required for either IFN induction or response pathways. Acts cooperatively with NS2 to repress activation and nuclear translocation of host IFN-regulatory factor IRF3. Also disrupts the association of IRF3 with CREBBP. Interacts with host mitochondrial-associated membrane (MAM) MAVS and prevents the interaction with RIGI. Interacts with TRIM25 to suppress TRIM25-mediated RIGI ubiquitination and thereby RIGI-MAVS interaction. Together with NS2, participates in the proteasomal degradation of host STAT2, IRF3, IRF7, TBK1 and RIGI through a NS-degradasome involving CUL2 and Elongin-C. The degradasome requires an intact mitochondrial MAVS. Decreases the levels of host TRAF3 and IKBKE/IKK-epsilon. As functions other than disruptions of the type I IFN-mediated antiviral signaling pathways, induces host SOCS1 and SOCS3 expression. Suppresses premature apoptosis by an NF-kappa-B-dependent, interferon-independent mechanism and thus facilitates virus growth. Additionally, NS1 may serve some inhibitory role in viral transcription and RNA replication. Suppresses proliferation and activation of host CD103+ CD8+ cytotoxic T-lymphocytes and Th17 helper T-lymphocytes. This Human respiratory syncytial virus B (strain 18537) protein is Non-structural protein 1 (1C).